We begin with the raw amino-acid sequence, 477 residues long: Aspartyl/glutamyl-tRNA(Asn/Gln) amidotransferase subunit B (477 aa).

Belongs to the GatB/GatE family. GatB subfamily. In terms of assembly, heterotrimer of A, B and C subunits.

The enzyme catalyses L-glutamyl-tRNA(Gln) + L-glutamine + ATP + H2O = L-glutaminyl-tRNA(Gln) + L-glutamate + ADP + phosphate + H(+). It carries out the reaction L-aspartyl-tRNA(Asn) + L-glutamine + ATP + H2O = L-asparaginyl-tRNA(Asn) + L-glutamate + ADP + phosphate + 2 H(+). In terms of biological role, allows the formation of correctly charged Asn-tRNA(Asn) or Gln-tRNA(Gln) through the transamidation of misacylated Asp-tRNA(Asn) or Glu-tRNA(Gln) in organisms which lack either or both of asparaginyl-tRNA or glutaminyl-tRNA synthetases. The reaction takes place in the presence of glutamine and ATP through an activated phospho-Asp-tRNA(Asn) or phospho-Glu-tRNA(Gln). This is Aspartyl/glutamyl-tRNA(Asn/Gln) amidotransferase subunit B from Legionella pneumophila (strain Paris).